We begin with the raw amino-acid sequence, 442 residues long: Transducin beta-like protein 2 (442 aa).

A disordered region spans residues 36–71 (EKPSQPVCQKENEPKKSGSKKQKQNQRVRKEKPQQH). The segment covering 52–65 (SGSKKQKQNQRVRK) has biased composition (basic residues). WD repeat units lie at residues 84 to 123 (SHSGNISCMDFSSNGKYLATCADDRTVRIWSTKDFLQREH), 130 to 170 (VELD…DGGF), 182 to 222 (KHKA…STIN), 224 to 263 (NQMNNSHAVISPCSRFVGSCGFTPDVKVWEVCFGKKGEFQ), 273 to 312 (GHSASVHSFAFSNDSRRMASVSKDGTWKLWDTDVEYKKQQ), 323 to 362 (EEASTMPCRLALSPDTHVLALATGTNIHLFNTRRGEKEEY), and 366 to 404 (VHGECIADLTFDITGRFLASCGDRAVRLFHNTPGHRAVV). Residue K164 forms a Glycyl lysine isopeptide (Lys-Gly) (interchain with G-Cter in SUMO2) linkage. T428 is subject to Phosphothreonine.

The protein is Transducin beta-like protein 2 (Tbl2) of Mus musculus (Mouse).